Consider the following 1134-residue polypeptide: Ovochymase-1 (1134 aa).

The signal sequence occupies residues 1–22 (MGLLASAGLLLLLVIGHPRSLG). A propeptide spans 23 to 46 (LKCGIRMVNMKSKEPAVGSRFFSR) (activation peptide). The Peptidase S1 1 domain occupies 38–296 (AVGSRFFSRI…LMDFITQNLF (259 aa)). The N-linked (GlcNAc...) asparagine glycan is linked to Asn-52. Cysteines 72 and 88 form a disulfide. His-87 acts as the Charge relay system in catalysis. The N-linked (GlcNAc...) asparagine glycan is linked to Asn-99. Glu-116 contributes to the Ca(2+) binding site. The active-site Charge relay system is the Asp-139. 3 disulfide bridges follow: Cys-173–Cys-243, Cys-204–Cys-222, and Cys-233–Cys-262. Ser-237 functions as the Charge relay system in the catalytic mechanism. 2 consecutive CUB domains span residues 284–410 (VSEL…VTAV) and 419–531 (CGSL…FTIL). N-linked (GlcNAc...) asparagine glycosylation is present at Asn-324. 3 disulfide bridges follow: Cys-341–Cys-373, Cys-419–Cys-446, and Cys-473–Cys-494. An N-linked (GlcNAc...) asparagine glycan is attached at Asn-431. A glycan (N-linked (GlcNAc...) asparagine) is linked at Asn-507. The Peptidase S1 2 domain occupies 575–812 (IAGGEEACPH…FLDWIQSKIN (238 aa)). An intrachain disulfide couples Cys-600 to Cys-616. Catalysis depends on charge relay system residues His-615 and Asp-664. Disulfide bonds link Cys-698-Cys-769, Cys-729-Cys-747, Cys-759-Cys-788, and Cys-846-Cys-873. The active-site Charge relay system is Ser-763. The CUB 3 domain maps to 846-957 (CSEAELEKPR…GAFGISYIVL (112 aa)). Asn-1106 carries N-linked (GlcNAc...) asparagine glycosylation.

It belongs to the peptidase S1 family.

Its subcellular location is the secreted. The protein is Ovochymase-1 (OVCH1) of Homo sapiens (Human).